The primary structure comprises 320 residues: Protease HtpX homolog (320 aa).

2 helical membrane-spanning segments follow: residues 6–26 (TAMLLAFMTALFMFVGFLIGG) and 28–48 (AGMMIAFVIAAGMNFFSYWNS). His130 is a Zn(2+) binding site. The active site involves Glu131. Residue His134 coordinates Zn(2+). 2 consecutive transmembrane segments (helical) span residues 145-165 (ITATLAGAISMLGNFAFFFGG) and 173-193 (PLGFVGVIVAMIVAPLAAMLV). Glu202 lines the Zn(2+) pocket. The segment at 283-320 (MNVSTSPARAANPSRKSRSVPDTGLGRGGSQPPKGPWS) is disordered.

Belongs to the peptidase M48B family. It depends on Zn(2+) as a cofactor.

It localises to the cell inner membrane. This is Protease HtpX homolog from Rhizobium johnstonii (strain DSM 114642 / LMG 32736 / 3841) (Rhizobium leguminosarum bv. viciae).